Here is a 231-residue protein sequence, read N- to C-terminus: AA9 family lytic polysaccharide monooxygenase C (231 aa).

The first 18 residues, 1–18 (MKSGLLFTTASLALTASA), serve as a signal peptide directing secretion. His-19 contributes to the Cu(2+) binding site. A disulfide bridge links Cys-60 with Cys-179. Residues Asn-69 and Asn-143 are each glycosylated (N-linked (GlcNAc...) asparagine). O2 contacts are provided by His-165 and Gln-174. Tyr-176 is a binding site for Cu(2+).

The protein belongs to the polysaccharide monooxygenase AA9 family. Requires Cu(2+) as cofactor.

The protein resides in the secreted. The catalysed reaction is [(1-&gt;4)-beta-D-glucosyl]n+m + reduced acceptor + O2 = 4-dehydro-beta-D-glucosyl-[(1-&gt;4)-beta-D-glucosyl]n-1 + [(1-&gt;4)-beta-D-glucosyl]m + acceptor + H2O.. In terms of biological role, lytic polysaccharide monooxygenase (LPMO) that depolymerizes crystalline and amorphous polysaccharides via the oxidation of scissile alpha- or beta-(1-4)-glycosidic bonds, yielding C1 oxidation products. Catalysis by LPMOs requires the reduction of the active-site copper from Cu(II) to Cu(I) by a reducing agent and H(2)O(2) or O(2) as a cosubstrate. The polypeptide is AA9 family lytic polysaccharide monooxygenase C (Emericella nidulans (strain FGSC A4 / ATCC 38163 / CBS 112.46 / NRRL 194 / M139) (Aspergillus nidulans)).